Reading from the N-terminus, the 1532-residue chain is Glycogen debranching enzyme (1532 aa).

Serine 64 is subject to Phosphoserine. Residues aspartate 526, histidine 529, and aspartate 627 contribute to the active site.

It belongs to the glycogen debranching enzyme family. Monomer. Interacts with NHLRC1/malin. In terms of processing, the N-terminus is blocked. Post-translationally, ubiquitinated. Liver, kidney and lymphoblastoid cells express predominantly isoform 1; whereas muscle and heart express not only isoform 1, but also muscle-specific isoform mRNAs (isoforms 2, 3 and 4). Isoforms 5 and 6 are present in both liver and muscle.

It localises to the cytoplasm. It catalyses the reaction Transfers a segment of a (1-&gt;4)-alpha-D-glucan to a new position in an acceptor, which may be glucose or a (1-&gt;4)-alpha-D-glucan.. It carries out the reaction Hydrolysis of (1-&gt;6)-alpha-D-glucosidic branch linkages in glycogen phosphorylase limit dextrin.. Multifunctional enzyme acting as 1,4-alpha-D-glucan:1,4-alpha-D-glucan 4-alpha-D-glycosyltransferase and amylo-1,6-glucosidase in glycogen degradation. This chain is Glycogen debranching enzyme (AGL), found in Homo sapiens (Human).